Reading from the N-terminus, the 463-residue chain is DNA repair exonuclease REC1 (463 aa).

Disordered stretches follow at residues 81-128 (RGST…HTKK) and 172-203 (PSRPHSSSSGLPGFRPEQGSAEAPPGGRGYQR). Residues 90-100 (SRPKKRSKLTS) are compositionally biased toward basic residues.

Belongs to the rad1 family.

It localises to the nucleus. It carries out the reaction Exonucleolytic cleavage in the 3'- to 5'-direction to yield nucleoside 5'-phosphates.. In terms of biological role, plays a central role in regulating the genetic system of this fungus. Has a 3'--&gt;5' exonuclease activity. The polypeptide is DNA repair exonuclease REC1 (REC1) (Mycosarcoma maydis (Corn smut fungus)).